A 490-amino-acid chain; its full sequence is Betaine aldehyde dehydrogenase (490 aa).

K(+)-binding residues include threonine 26, isoleucine 27, and aspartate 93. 150-152 is a binding site for NAD(+); the sequence is GAW. Lysine 162 acts as the Charge relay system in catalysis. An NAD(+)-binding site is contributed by 176 to 179; sequence KPSE. Residue valine 180 participates in K(+) binding. Residue 230 to 233 coordinates NAD(+); the sequence is GVAS. Leucine 246 is a K(+) binding site. Glutamate 252 functions as the Proton acceptor in the catalytic mechanism. The NAD(+) site is built by glycine 254, cysteine 286, and glutamate 387. The Nucleophile role is filled by cysteine 286. Cysteine 286 carries the post-translational modification Cysteine sulfenic acid (-SOH). Residues lysine 457 and glycine 460 each coordinate K(+). Glutamate 464 functions as the Charge relay system in the catalytic mechanism.

The protein belongs to the aldehyde dehydrogenase family. Dimer of dimers. K(+) is required as a cofactor.

It catalyses the reaction betaine aldehyde + NAD(+) + H2O = glycine betaine + NADH + 2 H(+). It functions in the pathway amine and polyamine biosynthesis; betaine biosynthesis via choline pathway; betaine from betaine aldehyde: step 1/1. In terms of biological role, involved in the biosynthesis of the osmoprotectant glycine betaine. Catalyzes the irreversible oxidation of betaine aldehyde to the corresponding acid. The protein is Betaine aldehyde dehydrogenase of Escherichia coli O6:H1 (strain CFT073 / ATCC 700928 / UPEC).